Here is a 137-residue protein sequence, read N- to C-terminus: Large-conductance mechanosensitive channel (137 aa).

The next 3 membrane-spanning stretches (helical) occupy residues 15 to 35 (IDLAIGVIIGGAFGGLVNSIV), 38 to 58 (IFMPIIGLITGGIDFSNMFIQ), and 80 to 100 (GNFITLLINFLIIAWVLFLFV).

Belongs to the MscL family. In terms of assembly, homopentamer.

It is found in the cell inner membrane. Channel that opens in response to stretch forces in the membrane lipid bilayer. May participate in the regulation of osmotic pressure changes within the cell. This is Large-conductance mechanosensitive channel from Bartonella henselae (strain ATCC 49882 / DSM 28221 / CCUG 30454 / Houston 1) (Rochalimaea henselae).